A 296-amino-acid chain; its full sequence is Sulfate adenylyltransferase subunit 2 (296 aa).

This sequence belongs to the PAPS reductase family. CysD subfamily. Heterodimer composed of CysD, the smaller subunit, and CysN.

It carries out the reaction sulfate + ATP + H(+) = adenosine 5'-phosphosulfate + diphosphate. It functions in the pathway sulfur metabolism; hydrogen sulfide biosynthesis; sulfite from sulfate: step 1/3. Functionally, with CysN forms the ATP sulfurylase (ATPS) that catalyzes the adenylation of sulfate producing adenosine 5'-phosphosulfate (APS) and diphosphate, the first enzymatic step in sulfur assimilation pathway. APS synthesis involves the formation of a high-energy phosphoric-sulfuric acid anhydride bond driven by GTP hydrolysis by CysN coupled to ATP hydrolysis by CysD. The protein is Sulfate adenylyltransferase subunit 2 of Rhodospirillum rubrum (strain ATCC 11170 / ATH 1.1.1 / DSM 467 / LMG 4362 / NCIMB 8255 / S1).